We begin with the raw amino-acid sequence, 256 residues long: DNA repair protein RecO (256 aa).

The protein belongs to the RecO family.

Functionally, involved in DNA repair and RecF pathway recombination. In Rhizobium leguminosarum bv. trifolii (strain WSM2304), this protein is DNA repair protein RecO.